The following is a 328-amino-acid chain: 4-hydroxy-2-oxoglutarate aldolase, mitochondrial (328 aa).

Residues 1 to 26 (MFGRTLFPARVIALGSGLFRTPLRTL) constitute a mitochondrion transit peptide. 76-77 (SN) is a binding site for substrate. Catalysis depends on Lys-195, which acts as the Schiff-base intermediate with substrate. Residues Ser-197 and Gly-221 each contribute to the substrate site.

This sequence belongs to the DapA family. As to quaternary structure, homotetramer.

It localises to the mitochondrion. The enzyme catalyses (4S)-4-hydroxy-2-oxoglutarate = glyoxylate + pyruvate. The catalysed reaction is (4R)-4-hydroxy-2-oxoglutarate = glyoxylate + pyruvate. Its activity is regulated as follows. Inhibited by divalent cations. Its function is as follows. Catalyzes the final step in the metabolic pathway of hydroxyproline. In Xenopus tropicalis (Western clawed frog), this protein is 4-hydroxy-2-oxoglutarate aldolase, mitochondrial (hoga1).